The following is a 393-amino-acid chain: Ferrochelatase, mitochondrial (393 aa).

The transit peptide at 1–31 (MLSRTIRTQGSFLRRSQLTITRSFSVTFNMQ) directs the protein to the mitochondrion. Asp-351 is an active-site residue.

Belongs to the ferrochelatase family. Post-translationally, the leader peptide may be processed in two proteolytic steps, first between Ser-23 and Phe-24, second and by a different protease, to yield the mature protein.

It is found in the mitochondrion inner membrane. The enzyme catalyses heme b + 2 H(+) = protoporphyrin IX + Fe(2+). It functions in the pathway porphyrin-containing compound metabolism; protoheme biosynthesis; protoheme from protoporphyrin-IX: step 1/1. Functionally, catalyzes the ferrous insertion into protoporphyrin IX. The chain is Ferrochelatase, mitochondrial (HEM15) from Saccharomyces cerevisiae (strain ATCC 204508 / S288c) (Baker's yeast).